The primary structure comprises 423 residues: Putative UPF0496 protein 5 (423 aa).

Positions 1–14 (MGNRHGIMRPRRLA) are enriched in basic residues. The tract at residues 1–37 (MGNRHGIMRPRRLASGRSAAEEEEDGEGEPGSYEAAC) is disordered. 2 consecutive transmembrane segments (helical) span residues 224 to 244 (IVFLTSFAALLVCSVVAAAIA) and 247 to 267 (PVAAALAAAASMPVGSAGKWM).

Belongs to the UPF0496 family.

It localises to the membrane. This is Putative UPF0496 protein 5 from Oryza sativa subsp. japonica (Rice).